A 223-amino-acid polypeptide reads, in one-letter code: Deoxyribose-phosphate aldolase (223 aa).

Asp91 functions as the Proton donor/acceptor in the catalytic mechanism. Lys153 (schiff-base intermediate with acetaldehyde) is an active-site residue. Residue Lys182 is the Proton donor/acceptor of the active site.

It belongs to the DeoC/FbaB aldolase family. DeoC type 1 subfamily.

It localises to the cytoplasm. It catalyses the reaction 2-deoxy-D-ribose 5-phosphate = D-glyceraldehyde 3-phosphate + acetaldehyde. It participates in carbohydrate degradation; 2-deoxy-D-ribose 1-phosphate degradation; D-glyceraldehyde 3-phosphate and acetaldehyde from 2-deoxy-alpha-D-ribose 1-phosphate: step 2/2. In terms of biological role, catalyzes a reversible aldol reaction between acetaldehyde and D-glyceraldehyde 3-phosphate to generate 2-deoxy-D-ribose 5-phosphate. The polypeptide is Deoxyribose-phosphate aldolase (Yersinia pestis bv. Antiqua (strain Angola)).